A 414-amino-acid polypeptide reads, in one-letter code: Serine hydroxymethyltransferase (414 aa).

Residues L118 and 122 to 124 contribute to the (6S)-5,6,7,8-tetrahydrofolate site; that span reads GHL. K227 carries the N6-(pyridoxal phosphate)lysine modification. Residues E240 and 350 to 352 contribute to the (6S)-5,6,7,8-tetrahydrofolate site; that span reads SPF.

Belongs to the SHMT family. As to quaternary structure, homodimer. The cofactor is pyridoxal 5'-phosphate.

The protein resides in the cytoplasm. It carries out the reaction (6R)-5,10-methylene-5,6,7,8-tetrahydrofolate + glycine + H2O = (6S)-5,6,7,8-tetrahydrofolate + L-serine. It participates in one-carbon metabolism; tetrahydrofolate interconversion. The protein operates within amino-acid biosynthesis; glycine biosynthesis; glycine from L-serine: step 1/1. Functionally, catalyzes the reversible interconversion of serine and glycine with tetrahydrofolate (THF) serving as the one-carbon carrier. This reaction serves as the major source of one-carbon groups required for the biosynthesis of purines, thymidylate, methionine, and other important biomolecules. Also exhibits THF-independent aldolase activity toward beta-hydroxyamino acids, producing glycine and aldehydes, via a retro-aldol mechanism. This chain is Serine hydroxymethyltransferase, found in Bacillus cereus (strain ZK / E33L).